A 485-amino-acid chain; its full sequence is Protein LAZ1 (485 aa).

At 1–19 the chain is on the cytoplasmic side; it reads MDILKSYHLLAAAYSAPAW. Residues 20–40 form a helical membrane-spanning segment; sequence ASFMAGAFLVLTLSLSLFLVF. Topologically, residues 41 to 53 are lumenal; sequence DHLSTYKNPEEQK. Residues 54–74 traverse the membrane as a helical segment; it reads FLIGVILMVPCYSIESFASLV. Topologically, residues 75 to 167 are cytoplasmic; that stretch reads KPSISVDCGI…QVVKFGIVQY (93 aa). A helical transmembrane segment spans residues 168 to 188; the sequence is MIIKSLTALTALILEAFGVYC. At 189 to 196 the chain is on the lumenal side; the sequence is EGEFKWGC. A helical membrane pass occupies residues 197 to 217; it reads GYPYLAVVLNFSQSWALYCLV. The Cytoplasmic segment spans residues 218–241; it reads QFYGATKDELAHIQPLAKFLTFKS. A helical transmembrane segment spans residues 242 to 262; the sequence is IVFLTWWQGVAIALLSSLGLF. Over 263–277 the chain is Lumenal; sequence KSSIAQSLQLKTSVQ. Residues 278-298 traverse the membrane as a helical segment; that stretch reads DFIICIEMGIASVVHLYVFPA. Residues 299-485 are Cytoplasmic-facing; sequence KPYGLMGDRF…VRGRRWITKD (187 aa). Residues 384-415 adopt a coiled-coil conformation; that stretch reads MEKSITKFNEKLHKISQNIKKHDKEKRRVKDD. The tract at residues 400–485 is disordered; it reads QNIKKHDKEK…VRGRRWITKD (86 aa). The span at 403–416 shows a compositional bias: basic and acidic residues; the sequence is KKHDKEKRRVKDDS. A compositionally biased stretch (polar residues) spans 455-469; the sequence is GYTSAESGGESSSDQ. Over residues 476-485 the composition is skewed to basic and acidic residues; it reads VRGRRWITKD.

It belongs to the TMEM184 family.

The protein localises to the endomembrane system. It localises to the cell membrane. The protein resides in the cytoplasm. It is found in the cytosol. Required for programmed cell death (PCD) associated with hypersensitive response (HR). Involved both in the induction of EDS1/PAD4 mediated HR and in accelerated cell death in the acd11 mutant. Not required for HR induction elicited through pathways exclusively dependent on CC-NB-LRR resistance proteins. The polypeptide is Protein LAZ1 (Arabidopsis thaliana (Mouse-ear cress)).